The chain runs to 496 residues: Glutamyl-tRNA(Gln) amidotransferase subunit A (496 aa).

Catalysis depends on charge relay system residues Lys75 and Ser150. The active-site Acyl-ester intermediate is the Ser174.

Belongs to the amidase family. GatA subfamily. Heterotrimer of A, B and C subunits.

It carries out the reaction L-glutamyl-tRNA(Gln) + L-glutamine + ATP + H2O = L-glutaminyl-tRNA(Gln) + L-glutamate + ADP + phosphate + H(+). Allows the formation of correctly charged Gln-tRNA(Gln) through the transamidation of misacylated Glu-tRNA(Gln) in organisms which lack glutaminyl-tRNA synthetase. The reaction takes place in the presence of glutamine and ATP through an activated gamma-phospho-Glu-tRNA(Gln). The chain is Glutamyl-tRNA(Gln) amidotransferase subunit A from Burkholderia vietnamiensis (strain G4 / LMG 22486) (Burkholderia cepacia (strain R1808)).